The following is a 661-amino-acid chain: Peroxisomal acyl-coenzyme A oxidase 1 (661 aa).

Serine 26 is subject to Phosphoserine. Lysine 65 carries the post-translational modification N6-acetyllysine. Lysine 89 is subject to N6-succinyllysine. Threonine 139 lines the FAD pocket. N6-succinyllysine is present on lysine 159. Glycine 178 provides a ligand contact to FAD. The residue at position 216 (lysine 216) is an N6-acetyllysine. Lysine 241 is subject to N6-succinyllysine. Lysine 255, lysine 267, and lysine 272 each carry N6-acetyllysine. The residue at position 349 (lysine 349) is an N6-succinyllysine. The Proton acceptor role is filled by glutamate 421. N6-acetyllysine; alternate occurs at positions 437 and 446. N6-succinyllysine; alternate occurs at positions 437 and 446. Position 500 is an N6-acetyllysine (lysine 500). The residue at position 512 (lysine 512) is an N6-acetyllysine; alternate. Residue lysine 512 is modified to N6-succinyllysine; alternate. Lysine 542 bears the N6-succinyllysine mark. Position 637 is an N6-acetyllysine; alternate (lysine 637). Lysine 637 carries the N6-succinyllysine; alternate modification. Residue lysine 643 is modified to N6-succinyllysine. Position 649 is a phosphoserine (serine 649). The residue at position 652 (lysine 652) is an N6-acetyllysine. Position 655 is an N6-succinyllysine (lysine 655). The short motif at 659–661 is the Microbody targeting signal element; that stretch reads SKL.

It belongs to the acyl-CoA oxidase family. In terms of assembly, homodimer. Interacts with LONP2. FAD serves as cofactor.

It is found in the peroxisome. The enzyme catalyses a 2,3-saturated acyl-CoA + O2 = a (2E)-enoyl-CoA + H2O2. The catalysed reaction is hexadecanoyl-CoA + O2 = (2E)-hexadecenoyl-CoA + H2O2. It carries out the reaction dodecanoyl-CoA + O2 = (2E)-dodecenoyl-CoA + H2O2. It catalyses the reaction octanoyl-CoA + O2 = (2E)-octenoyl-CoA + H2O2. The enzyme catalyses decanoyl-CoA + O2 = (2E)-decenoyl-CoA + H2O2. The catalysed reaction is tetradecanoyl-CoA + O2 = (2E)-tetradecenoyl-CoA + H2O2. It carries out the reaction hexadecanedioyl-CoA + O2 = (2E)-hexadecenedioyl-CoA + H2O2. It catalyses the reaction tetracosanoyl-CoA + O2 = (2E)-tetracosenoyl-CoA + H2O2. The enzyme catalyses glutaryl-CoA + O2 = (2E)-glutaconyl-CoA + H2O2. The catalysed reaction is hexanoyl-CoA + O2 = (2E)-hexenoyl-CoA + H2O2. It carries out the reaction octadecanoyl-CoA + O2 = (2E)-octadecenoyl-CoA + H2O2. It catalyses the reaction (5Z,8Z,11Z,14Z,17Z)-eicosapentaenoyl-CoA + O2 = (2E,5Z,8Z,11Z,14Z,17Z)-icosahexaenoyl-CoA + H2O2. The enzyme catalyses (6Z,9Z,12Z,15Z,18Z,21Z)-tetracosahexaenoyl-CoA + O2 = (2E,6Z,9Z,12Z,15Z,18Z,21Z)-tetracosaheptaenoyl-CoA + H2O2. It participates in lipid metabolism; peroxisomal fatty acid beta-oxidation. Its function is as follows. Involved in the initial and rate-limiting step of peroxisomal beta-oxidation of straight-chain saturated and unsaturated very-long-chain fatty acids. Catalyzes the desaturation of fatty acyl-CoAs such as palmitoyl-CoA (hexadecanoyl-CoA) to 2-trans-enoyl-CoAs ((2E)-enoyl-CoAs) such as (2E)-hexadecenoyl-CoA, and donates electrons directly to molecular oxygen (O(2)), thereby producing hydrogen peroxide (H(2)O(2)). The polypeptide is Peroxisomal acyl-coenzyme A oxidase 1 (Cavia porcellus (Guinea pig)).